The following is a 270-amino-acid chain: MPELPEVETTIRGLSEVLMGEKIIDVKVRRASLRRPIPSDIQERLIGSTIISLSRRAKYGIIVNDRDDALIFHLGMSGRWKINPENFEKHDHFVLQTKNNFIVSLYDPRRFGSLDLVKKNQLLEWSYFRNIGPEPLTGNFNPEYLQKKLFSSSAPIKKILLDQKVVAGIGNIYACEALHQAKIHPQRPSKNLNFDEITSLVFSIKNILQKAIAEGGSTLKDYARPNGELGYFSTKFKVYGKEGEQCECGHTIERYTLGGRSTFLCSSCQK.

Pro-2 functions as the Schiff-base intermediate with DNA in the catalytic mechanism. The active-site Proton donor is Glu-3. Lys-58 (proton donor; for beta-elimination activity) is an active-site residue. Positions 90 and 109 each coordinate DNA. Residues 237–270 (KVYGKEGEQCECGHTIERYTLGGRSTFLCSSCQK) form an FPG-type zinc finger. The active-site Proton donor; for delta-elimination activity is Arg-260.

The protein belongs to the FPG family. In terms of assembly, monomer. Requires Zn(2+) as cofactor.

The enzyme catalyses Hydrolysis of DNA containing ring-opened 7-methylguanine residues, releasing 2,6-diamino-4-hydroxy-5-(N-methyl)formamidopyrimidine.. It catalyses the reaction 2'-deoxyribonucleotide-(2'-deoxyribose 5'-phosphate)-2'-deoxyribonucleotide-DNA = a 3'-end 2'-deoxyribonucleotide-(2,3-dehydro-2,3-deoxyribose 5'-phosphate)-DNA + a 5'-end 5'-phospho-2'-deoxyribonucleoside-DNA + H(+). In terms of biological role, involved in base excision repair of DNA damaged by oxidation or by mutagenic agents. Acts as a DNA glycosylase that recognizes and removes damaged bases. Has a preference for oxidized purines, such as 7,8-dihydro-8-oxoguanine (8-oxoG). Has AP (apurinic/apyrimidinic) lyase activity and introduces nicks in the DNA strand. Cleaves the DNA backbone by beta-delta elimination to generate a single-strand break at the site of the removed base with both 3'- and 5'-phosphates. In Zymomonas mobilis subsp. mobilis (strain ATCC 31821 / ZM4 / CP4), this protein is Formamidopyrimidine-DNA glycosylase (mutM).